The following is a 247-amino-acid chain: 2,3-bisphosphoglycerate-dependent phosphoglycerate mutase (247 aa).

Substrate is bound by residues Arg-8–Asn-15, Thr-21–Gly-22, Arg-60, Glu-87–Tyr-90, Lys-98, Arg-114–Arg-115, and Gly-183–Asn-184. The Tele-phosphohistidine intermediate role is filled by His-9. Glu-87 serves as the catalytic Proton donor/acceptor.

The protein belongs to the phosphoglycerate mutase family. BPG-dependent PGAM subfamily. As to quaternary structure, homodimer.

It catalyses the reaction (2R)-2-phosphoglycerate = (2R)-3-phosphoglycerate. The protein operates within carbohydrate degradation; glycolysis; pyruvate from D-glyceraldehyde 3-phosphate: step 3/5. Catalyzes the interconversion of 2-phosphoglycerate and 3-phosphoglycerate. This Methylibium petroleiphilum (strain ATCC BAA-1232 / LMG 22953 / PM1) protein is 2,3-bisphosphoglycerate-dependent phosphoglycerate mutase.